A 302-amino-acid chain; its full sequence is 4-hydroxy-tetrahydrodipicolinate synthase (302 aa).

Position 46 (T46) interacts with pyruvate. Y134 (proton donor/acceptor) is an active-site residue. Catalysis depends on K162, which acts as the Schiff-base intermediate with substrate. V204 is a pyruvate binding site.

Belongs to the DapA family. In terms of assembly, homotetramer; dimer of dimers.

It is found in the cytoplasm. It carries out the reaction L-aspartate 4-semialdehyde + pyruvate = (2S,4S)-4-hydroxy-2,3,4,5-tetrahydrodipicolinate + H2O + H(+). It participates in amino-acid biosynthesis; L-lysine biosynthesis via DAP pathway; (S)-tetrahydrodipicolinate from L-aspartate: step 3/4. Functionally, catalyzes the condensation of (S)-aspartate-beta-semialdehyde [(S)-ASA] and pyruvate to 4-hydroxy-tetrahydrodipicolinate (HTPA). The sequence is that of 4-hydroxy-tetrahydrodipicolinate synthase from Xylella fastidiosa (strain Temecula1 / ATCC 700964).